The chain runs to 205 residues: Guanylate kinase (205 aa).

Residues 7–185 enclose the Guanylate kinase-like domain; it reads GNIFIISAAS…AEEDLRHIVN (179 aa). Position 14 to 21 (14 to 21) interacts with ATP; sequence AASGTGKT.

Belongs to the guanylate kinase family.

It localises to the cytoplasm. The catalysed reaction is GMP + ATP = GDP + ADP. Its function is as follows. Essential for recycling GMP and indirectly, cGMP. In Neisseria meningitidis serogroup A / serotype 4A (strain DSM 15465 / Z2491), this protein is Guanylate kinase (gmk).